The primary structure comprises 440 residues: Murein DD-endopeptidase MepM (440 aa).

A helical membrane pass occupies residues 21–40 (VMLGSLTVLTLAVAVWRPYV). The 46-residue stretch at 96–141 (HEYVVSTGDTLSSILNQYGIDMGDITQLAAADKELRNLKIGQQLSW) folds into the LysM domain. A Zn(2+)-binding site is contributed by H314.

Belongs to the peptidase M23B family. Zn(2+) serves as cofactor.

It localises to the cell membrane. The protein operates within cell wall biogenesis; cell wall polysaccharide biosynthesis. A murein DD-endopeptidase with specificity for D-Ala-meso-diaminopimelic acid (mDAP) cross-links. Its role is probably to cleave D-Ala-mDAP cross-links to allow insertion of new glycans and thus cell wall expansion. Functionally redundant with MepM and MepH. The sequence is that of Murein DD-endopeptidase MepM (mepM) from Escherichia coli O6:H1 (strain CFT073 / ATCC 700928 / UPEC).